The primary structure comprises 391 residues: Formate-dependent phosphoribosylglycinamide formyltransferase (391 aa).

N(1)-(5-phospho-beta-D-ribosyl)glycinamide contacts are provided by residues Glu-18–Leu-19 and Glu-78. Residues Arg-110, Lys-151, Ser-156–Gln-161, Glu-191–Ile-194, and Glu-199 each bind ATP. Residues Glu-115–Leu-305 form the ATP-grasp domain. Residues Glu-264 and Glu-276 each coordinate Mg(2+). N(1)-(5-phospho-beta-D-ribosyl)glycinamide contacts are provided by residues Asp-283, Lys-353, and Arg-360 to Arg-361.

It belongs to the PurK/PurT family. In terms of assembly, homodimer.

The catalysed reaction is N(1)-(5-phospho-beta-D-ribosyl)glycinamide + formate + ATP = N(2)-formyl-N(1)-(5-phospho-beta-D-ribosyl)glycinamide + ADP + phosphate + H(+). It participates in purine metabolism; IMP biosynthesis via de novo pathway; N(2)-formyl-N(1)-(5-phospho-D-ribosyl)glycinamide from N(1)-(5-phospho-D-ribosyl)glycinamide (formate route): step 1/1. In terms of biological role, involved in the de novo purine biosynthesis. Catalyzes the transfer of formate to 5-phospho-ribosyl-glycinamide (GAR), producing 5-phospho-ribosyl-N-formylglycinamide (FGAR). Formate is provided by PurU via hydrolysis of 10-formyl-tetrahydrofolate. This Synechocystis sp. (strain ATCC 27184 / PCC 6803 / Kazusa) protein is Formate-dependent phosphoribosylglycinamide formyltransferase.